Here is a 79-residue protein sequence, read N- to C-terminus: D-alanyl carrier protein (79 aa).

The region spanning 2–79 (AEFKEQVLDI…MVIKKLEEIR (78 aa)) is the Carrier domain. Ser-37 is modified (O-(pantetheine 4'-phosphoryl)serine).

This sequence belongs to the DltC family. Post-translationally, 4'-phosphopantetheine is transferred from CoA to a specific serine of apo-DCP.

Its subcellular location is the cytoplasm. Its pathway is cell wall biogenesis; lipoteichoic acid biosynthesis. In terms of biological role, carrier protein involved in the D-alanylation of lipoteichoic acid (LTA). The loading of thioester-linked D-alanine onto DltC is catalyzed by D-alanine--D-alanyl carrier protein ligase DltA. The DltC-carried D-alanyl group is further transferred to cell membrane phosphatidylglycerol (PG) by forming an ester bond, probably catalyzed by DltD. D-alanylation of LTA plays an important role in modulating the properties of the cell wall in Gram-positive bacteria, influencing the net charge of the cell wall. In Bacillus anthracis (strain CDC 684 / NRRL 3495), this protein is D-alanyl carrier protein.